A 186-amino-acid chain; its full sequence is Large ribosomal subunit protein uL5 (186 aa).

Belongs to the universal ribosomal protein uL5 family. As to quaternary structure, part of the 50S ribosomal subunit; part of the 5S rRNA/L5/L18/L25 subcomplex. Contacts the 5S rRNA and the P site tRNA. Forms a bridge to the 30S subunit in the 70S ribosome.

In terms of biological role, this is one of the proteins that bind and probably mediate the attachment of the 5S RNA into the large ribosomal subunit, where it forms part of the central protuberance. In the 70S ribosome it contacts protein S13 of the 30S subunit (bridge B1b), connecting the 2 subunits; this bridge is implicated in subunit movement. Contacts the P site tRNA; the 5S rRNA and some of its associated proteins might help stabilize positioning of ribosome-bound tRNAs. The polypeptide is Large ribosomal subunit protein uL5 (Porphyromonas gingivalis (strain ATCC 33277 / DSM 20709 / CIP 103683 / JCM 12257 / NCTC 11834 / 2561)).